We begin with the raw amino-acid sequence, 210 residues long: Urease accessory protein UreF (210 aa).

This sequence belongs to the UreF family. UreD, UreF and UreG form a complex that acts as a GTP-hydrolysis-dependent molecular chaperone, activating the urease apoprotein by helping to assemble the nickel containing metallocenter of UreC. The UreE protein probably delivers the nickel.

The protein localises to the cytoplasm. In terms of biological role, required for maturation of urease via the functional incorporation of the urease nickel metallocenter. This is Urease accessory protein UreF from Cereibacter sphaeroides (strain ATCC 17023 / DSM 158 / JCM 6121 / CCUG 31486 / LMG 2827 / NBRC 12203 / NCIMB 8253 / ATH 2.4.1.) (Rhodobacter sphaeroides).